A 206-amino-acid polypeptide reads, in one-letter code: MELKLLQDNGQIGAGVAASAEVFGRDYNEALVHQIVVAYQANARSGNRKQKDREEVKHTTKKPWRQKGTGRARAGMSSSPLWRGGGRIFPNSPEENFSQKVNKKMFRAGMRSIYSQLAREGRINVVDGFAVDAPKTKLLADKFKAMGLDSVLIITDNLDENLYLASRNLPNVAVVEPRHADPLSLVHYKKVLVTKAAVAQIEELLK.

The disordered stretch occupies residues 43–78; it reads ARSGNRKQKDREEVKHTTKKPWRQKGTGRARAGMSS. Basic and acidic residues predominate over residues 49 to 58; sequence KQKDREEVKH. Residues 59 to 70 are compositionally biased toward basic residues; sequence TTKKPWRQKGTG.

This sequence belongs to the universal ribosomal protein uL4 family. In terms of assembly, part of the 50S ribosomal subunit.

In terms of biological role, one of the primary rRNA binding proteins, this protein initially binds near the 5'-end of the 23S rRNA. It is important during the early stages of 50S assembly. It makes multiple contacts with different domains of the 23S rRNA in the assembled 50S subunit and ribosome. Functionally, forms part of the polypeptide exit tunnel. This Cupriavidus metallidurans (strain ATCC 43123 / DSM 2839 / NBRC 102507 / CH34) (Ralstonia metallidurans) protein is Large ribosomal subunit protein uL4.